The sequence spans 110 residues: Insulin (110 aa).

The N-terminal stretch at 1-24 (MALWMRLLPLLALLALWGPDPVPA) is a signal peptide. 3 disulfide bridges follow: cysteine 31–cysteine 96, cysteine 43–cysteine 109, and cysteine 95–cysteine 100. Positions 57–87 (EAEDPQVGQVELGGGPGAGSLQPLALEGSLQ) are cleaved as a propeptide — c peptide.

The protein belongs to the insulin family. In terms of assembly, heterodimer of a B chain and an A chain linked by two disulfide bonds.

The protein localises to the secreted. Insulin decreases blood glucose concentration. It increases cell permeability to monosaccharides, amino acids and fatty acids. It accelerates glycolysis, the pentose phosphate cycle, and glycogen synthesis in liver. This Chlorocebus aethiops (Green monkey) protein is Insulin (INS).